The following is a 621-amino-acid chain: Kelch-like protein 40 (621 aa).

The BTB domain maps to Leu-33–Glu-98. The BACK domain maps to Cys-133–Glu-239. The segment at Ile-265–Asp-295 is disordered. Basic and acidic residues predominate over residues Lys-275–Ala-292. Kelch repeat units follow at residues Gln-360–Asn-412, Ser-413–Asp-462, Leu-463–Gly-510, Ile-512–Gly-557, and Leu-559–Leu-613.

This sequence belongs to the KLHL40 family. As to quaternary structure, component of the BCR(KLHL40) E3 ubiquitin ligase complex, at least composed of CUL3, KLHL40 and RBX1. Interacts with LMOD3. As to expression, highly expressed in fetal (19, 23 and 31 weeks of gestation) and adult skeletal muscle; expression levels tend to be higher in fetal compared to postnatal muscles (at protein level). Also expressed in fetal and adult heart.

The protein resides in the cytoplasm. Its subcellular location is the myofibril. The protein localises to the sarcomere. It localises to the a band. It is found in the i band. In terms of biological role, substrate-specific adapter of a BCR (BTB-CUL3-RBX1) E3 ubiquitin ligase complex that acts as a key regulator of skeletal muscle development. The BCR(KLHL40) complex acts by mediating ubiquitination and degradation of TFDP1, thereby regulating the activity of the E2F:DP transcription factor complex. Promotes stabilization of LMOD3 by acting as a negative regulator of LMOD3 ubiquitination; the molecular process by which it negatively regulates ubiquitination of LMOD3 is however unclear. This is Kelch-like protein 40 from Homo sapiens (Human).